A 362-amino-acid polypeptide reads, in one-letter code: tRNA 2-selenouridine synthase (362 aa).

The Rhodanese domain maps to 12-135 (FLNDTPLLDV…LRRFLIDEME (124 aa)). Catalysis depends on Cys-95, which acts as the S-selanylcysteine intermediate.

The protein belongs to the SelU family. As to quaternary structure, monomer.

The enzyme catalyses 5-methylaminomethyl-2-thiouridine(34) in tRNA + selenophosphate + (2E)-geranyl diphosphate + H2O + H(+) = 5-methylaminomethyl-2-selenouridine(34) in tRNA + (2E)-thiogeraniol + phosphate + diphosphate. The catalysed reaction is 5-methylaminomethyl-2-thiouridine(34) in tRNA + (2E)-geranyl diphosphate = 5-methylaminomethyl-S-(2E)-geranyl-thiouridine(34) in tRNA + diphosphate. It catalyses the reaction 5-methylaminomethyl-S-(2E)-geranyl-thiouridine(34) in tRNA + selenophosphate + H(+) = 5-methylaminomethyl-2-(Se-phospho)selenouridine(34) in tRNA + (2E)-thiogeraniol. It carries out the reaction 5-methylaminomethyl-2-(Se-phospho)selenouridine(34) in tRNA + H2O = 5-methylaminomethyl-2-selenouridine(34) in tRNA + phosphate. In terms of biological role, involved in the post-transcriptional modification of the uridine at the wobble position (U34) of tRNA(Lys), tRNA(Glu) and tRNA(Gln). Catalyzes the conversion of 2-thiouridine (S2U-RNA) to 2-selenouridine (Se2U-RNA). Acts in a two-step process involving geranylation of 2-thiouridine (S2U) to S-geranyl-2-thiouridine (geS2U) and subsequent selenation of the latter derivative to 2-selenouridine (Se2U) in the tRNA chain. This is tRNA 2-selenouridine synthase from Alcanivorax borkumensis (strain ATCC 700651 / DSM 11573 / NCIMB 13689 / SK2).